The sequence spans 127 residues: Small ribosomal subunit protein bS6 (127 aa).

Belongs to the bacterial ribosomal protein bS6 family.

Its function is as follows. Binds together with bS18 to 16S ribosomal RNA. The polypeptide is Small ribosomal subunit protein bS6 (Buchnera aphidicola subsp. Cinara cedri (strain Cc)).